The primary structure comprises 1017 residues: Sodium/potassium-transporting ATPase subunit alpha-2 (1017 aa).

Positions 1–31 (MDGREYSPAATTSENGGGRRKQKEKELDELK) are disordered. Over 1–82 (MDGREYSPAA…NALTPPPTTP (82 aa)) the chain is Cytoplasmic. Residues 77 to 79 (PPP) are interaction with phosphoinositide-3 kinase. Residues 83–103 (EWVKFCRQLFGGFSILLWIGA) form a helical membrane-spanning segment. Residues 104–126 (ILCFLAYGIQAAMEDEPSNDNLY) lie on the Extracellular side of the membrane. The chain crosses the membrane as a helical span at residues 127–147 (LGVVLAAVVIVTGCFSYYQEA). Residues 148–283 (KSSKIMDSFK…VGRTPIAMEI (136 aa)) lie on the Cytoplasmic side of the membrane. Residues 207 to 228 (KVDNSSLTGESEPQTRSPEFTH) form a disordered region. A compositionally biased stretch (polar residues) spans 209–224 (DNSSLTGESEPQTRSP). A helical transmembrane segment spans residues 284 to 303 (EHFIRLITGVAVFLGLSFFI). Residues 304 to 315 (LSLILGYTWLEA) are Extracellular-facing. The chain crosses the membrane as a helical span at residues 316–333 (VIFLIGIIVANVPEGLLA). Residues 334–766 (TVTVCLTLTA…EEGRLIFDNL (433 aa)) are Cytoplasmic-facing. Asp371 functions as the 4-aspartylphosphate intermediate in the catalytic mechanism. Lys502 provides a ligand contact to ATP. Mg(2+)-binding residues include Asp711 and Asp715. The helical transmembrane segment at 767-786 (KKSIAYTLTSNIPEITPFLL) threads the bilayer. Residues 787-796 (FIIANIPLPL) are Extracellular-facing. The chain crosses the membrane as a helical span at residues 797-817 (GTVTILCIDLGTDMVPAISLA). Residues 818–837 (YEAAESDIMKRQPRNPRTDK) lie on the Cytoplasmic side of the membrane. Residues 838 to 860 (LVNERLISMAYGQIGMIQALGGF) traverse the membrane as a helical segment. Residues 861 to 912 (FTYFVILAENGFLPARLLGVRLAWDDRSTNDLEDSYGQEWTYEQRKVVEFTC) lie on the Extracellular side of the membrane. Residues 913-932 (HTAFFASIVVVQWADLIICK) traverse the membrane as a helical segment. At 933 to 945 (TRRNSVFQQGMKN) the chain is on the cytoplasmic side. Residue Ser937 is modified to Phosphoserine; by PKA. Residues 946-964 (KILIFGLLEETALAAFLSY) traverse the membrane as a helical segment. Over 965-979 (CPGMGVALRMYPLKV) the chain is Extracellular. A helical membrane pass occupies residues 980-1000 (TWWFCAFPYSLLIFAYDEVRK). The Cytoplasmic portion of the chain corresponds to 1001–1017 (LILRRYPGGWVEKETYY).

It belongs to the cation transport ATPase (P-type) (TC 3.A.3) family. Type IIC subfamily. The sodium/potassium-transporting ATPase is composed of a catalytic alpha subunit, an auxiliary non-catalytic beta subunit and an additional regulatory subunit.

The protein resides in the membrane. The protein localises to the cell membrane. The catalysed reaction is K(+)(out) + Na(+)(in) + ATP + H2O = K(+)(in) + Na(+)(out) + ADP + phosphate + H(+). Functionally, this is the catalytic component of the active enzyme, which catalyzes the hydrolysis of ATP coupled with the exchange of sodium and potassium ions across the plasma membrane. This action creates the electrochemical gradient of sodium and potassium ions, providing the energy for active transport of various nutrients. This Gallus gallus (Chicken) protein is Sodium/potassium-transporting ATPase subunit alpha-2 (ATP1A2).